We begin with the raw amino-acid sequence, 229 residues long: Matrix protein (229 aa).

Over residues 1–10 the composition is skewed to low complexity; the sequence is MSSLKKILGL. The interval 1 to 23 is disordered; that stretch reads MSSLKKILGLKGKGKKSKKLGIA. Residues 2–4 carry the dynamin binding motif; sequence SSL. Residues 24–27 carry the PPXY motif motif; that stretch reads PPPY. Residues 37 to 40 carry the PTAP/PSAP motif motif; it reads PSAP.

This sequence belongs to the vesiculoviruses matrix protein family. Homomultimer. Interacts with viral nucleocapsid; this interaction contributes to the virion assembly. Interacts with the viral envelope glycoprotein; this interaction contributes to the virion assembly. Interacts with host RAE1-NUP98 complex. Interacts with host NEDD4 and TSG101. Interacts with host dynamin. Interacts with host NDUFAF4; the interaction inhibits viral propagation and is independent of interferon activation. Interacts with host GTF2H5; the interaction may inhibit host transcription. In terms of processing, phosphorylated by host.

Its subcellular location is the virion. It is found in the host endomembrane system. It localises to the host nucleus membrane. The protein localises to the host nucleus. The protein resides in the host cytoplasm. Functionally, forms a double layer around the helical nucleocapsid, the inner matrix layer binding to the N helix and the outer matrix layer binding to the envelope glycoprotein. Plays a major role in assembly and budding of virion, by recruiting cellular partners of the ESCRT complexes that play a key role in releasing the budding particle from the host membrane. Condensates the ribonucleocapsid core during virus assembly. Inhibits the host mRNA nuclear export thereby inducing the shut off of cellular transcription and preventing the interferon signaling and the establishment of antiviral state in infected cells. This shutoff presumably inhibits interferon signaling and thus establishment of antiviral state in virus infected cells. Induces cell-rounding, cytoskeleton disorganization and apoptosis in infected cell. Inhibits host transcription, possibly through interaction with host DNA repair factor IIH/TFIIH GTF2H5 subunit. The chain is Matrix protein (M) from Vesicular stomatitis Indiana virus (strain 85CLB South America) (VSIV).